Reading from the N-terminus, the 423-residue chain is Enolase (423 aa).

Residue glutamine 164 coordinates (2R)-2-phosphoglycerate. Glutamate 206 acts as the Proton donor in catalysis. Aspartate 243, glutamate 289, and aspartate 316 together coordinate Mg(2+). The (2R)-2-phosphoglycerate site is built by lysine 341, arginine 370, serine 371, and lysine 392. Lysine 341 (proton acceptor) is an active-site residue.

Belongs to the enolase family. Requires Mg(2+) as cofactor.

Its subcellular location is the cytoplasm. The protein resides in the secreted. The protein localises to the cell surface. It catalyses the reaction (2R)-2-phosphoglycerate = phosphoenolpyruvate + H2O. It participates in carbohydrate degradation; glycolysis; pyruvate from D-glyceraldehyde 3-phosphate: step 4/5. Catalyzes the reversible conversion of 2-phosphoglycerate (2-PG) into phosphoenolpyruvate (PEP). It is essential for the degradation of carbohydrates via glycolysis. This chain is Enolase, found in Desulfotalea psychrophila (strain LSv54 / DSM 12343).